We begin with the raw amino-acid sequence, 1871 residues long: MNQPNRGQILQTVFSHFFPVASPDSELVPSSLHEDITPILRVAKDVEDTNPRSLFLQDLDIKSVDDSINILSGHSHALDKANELDPTSSGRDVRQFKNTILQWLEKNNESTLKARQKSSDAHEMQSFYQQYGDEGINDLLNAGAGSSSSQRTKIYQTAVVLYDVLDAVHRKANIKVAAKILESHAEVEAKNKIYVPYNILPLDPDSKNHAMMRDPKIVAVLKAIRYTSDLTWQIGHKINDDEDVLDWLKTMFRFQKDNVSNQREHLILLLANVQMRQTQRQPNLLDDRALDTVMEKLLGNYNKWCNHVGLESSLRFPKDKQQKVVQQRKLLYTGLYLLIWGEAANLRFMPECLCYIYHHMAFELFEMLESKGSKKKYKPKNPTYSGKDEDFLTKVVTPVYKTIAEEAKKSGEGKHSEWRNYDDLNEYFWSKQYLDKLGWPMKANADFFCKTSQQLGLNKSEKKPDLGDGCVGKVNFVEIRTFWHLFRSFDRMWSFYILSLQAMIIIAWNETSESGGAVFHKVLSVFITAAKLNLFQAFLDIALSWKARHSMSTHVRQRYIFKAVAAAVWVLLMPLTYAYSHTSIFIVAILIYLSPNMLPEMLLLIPSIRRTLEKSDFRPVKLIMWWSQPELYIGRGMHESAWSIYKYMMFWIVLLTSKLAFSYYVEQIKPLMGPTKEIMSVPMPGYWLPEFFPHVKNNRGVVITLWSPVILVYFMDTQIWYAIVSTLVGGLYGAFRHIGEIQTLGMLRSRFQSLPGAFNACLIPNENTKEKGIKLAFSRKCHKIPNTNGKEAKQFSQMWNTIINSFREEDLISNRELELLLMSCWAYPDLDFIRWPIFLLASKIPIAVDIAKKRNGKHRELKNILAEDNCMSCAVRECYASIKKLLNTLVTGNSDLMLITTVFTIIDTHIEKDTLLTELNLSVLPDLHGHFVKLTEYVLQNKDKDKIQIVNVLLKILEMVTKDILKEEIKRLHLLLTVKESAMDVPSNLEARRRLTFFSNSLFMEMPGAPKIQNMLSFSALTPYYSEDVLFSTFDLEKENDGVSILFYLQKIFPDEWKNFLERVKCGTEEELDAIDYLKEEIRLWASYRGQTLTKTVRGMMYYQKALELQAFFDLANERELMKGYKSAEASSSGSSLWAECQALADIKFTYVVACQQYSIHKRSGDQRAKDILTLMTTYPSLRVAYIDEVEQTHIYSKGTSENFYYSALVKAAPQTYSTDSSDSGHMLDQVIYQIKLPGPPIIGEGKPENQNNAIIFTRGEALQTIDMNQDYYIEEAFKMRNLLQEFLEKNGGVRYPTILGLREHIFTRSVSCLAWFMSNQEHSFVTIGQRVLANPLKVRFHYGHPDVFDRVFHLTRGGVSKASKVINLSEDIFAGFNSTLREGTVSHHEYIQVGKGRDVGLNQISMFEAKIANGSGEQTLSRDLYRLGHQFDFFRMLSCYFTTVGFYFCSMLTVLTVYVFLYGRLYLVLSGVEKELGNKPMMMEIILASQSFVQIVFLMAMPMIMEIGLERGFYDALFDFVLMQLQLASVFFTFQLGTKFHYYCKTLLHGGAEYRGTGRGFVVFHAKFAENYRFYSRSHFVKATELGILLLVYHIFGPTYIGLFTISIWFMVGTWLFAPFLFNPSGFEWHEIVEDWADWKKWIEYDNGGIGVPPEKSWESWWEKDIEHLQHSGKWGIVVEIFFALRFFIFQYGLVYQLSAFKNKYSSLWVFGASWLLILILLLTVTVLDYARRRLGTEFQLLFRIIKVSLFLAFMAIFITLMTCRLILPQDVFLCMLALIPTGWGLLLIAQSCKPLIQQPGIWSWVMTLAWVYDLVMGSLLFIPIAFMAWFPFISEFQTRMLFNQAFSRGLHISRILSGQRKHRSSKNKD.

The Cytoplasmic segment spans residues 1-491 (MNQPNRGQIL…FWHLFRSFDR (491 aa)). A helical membrane pass occupies residues 492 to 512 (MWSFYILSLQAMIIIAWNETS). At 513–521 (ESGGAVFHK) the chain is on the extracellular side. A helical transmembrane segment spans residues 522–542 (VLSVFITAAKLNLFQAFLDIA). At 543 to 558 (LSWKARHSMSTHVRQR) the chain is on the cytoplasmic side. The chain crosses the membrane as a helical span at residues 559 to 579 (YIFKAVAAAVWVLLMPLTYAY). Over 580 to 583 (SHTS) the chain is Extracellular. Residues 584 to 604 (IFIVAILIYLSPNMLPEMLLL) form a helical membrane-spanning segment. Over 605–640 (IPSIRRTLEKSDFRPVKLIMWWSQPELYIGRGMHES) the chain is Cytoplasmic. Residues 641–661 (AWSIYKYMMFWIVLLTSKLAF) traverse the membrane as a helical segment. The Extracellular portion of the chain corresponds to 662-701 (SYYVEQIKPLMGPTKEIMSVPMPGYWLPEFFPHVKNNRGV). The chain crosses the membrane as a helical span at residues 702-724 (VITLWSPVILVYFMDTQIWYAIV). Topologically, residues 725-1441 (STLVGGLYGA…FDFFRMLSCY (717 aa)) are cytoplasmic. The chain crosses the membrane as a helical span at residues 1442–1462 (FTTVGFYFCSMLTVLTVYVFL). Over 1463–1485 (YGRLYLVLSGVEKELGNKPMMME) the chain is Extracellular. A helical membrane pass occupies residues 1486-1506 (IILASQSFVQIVFLMAMPMIM). Topologically, residues 1507–1516 (EIGLERGFYD) are cytoplasmic. The chain crosses the membrane as a helical span at residues 1517 to 1537 (ALFDFVLMQLQLASVFFTFQL). At 1538 to 1580 (GTKFHYYCKTLLHGGAEYRGTGRGFVVFHAKFAENYRFYSRSH) the chain is on the extracellular side. 2 helical membrane-spanning segments follow: residues 1581–1601 (FVKATELGILLLVYHIFGPTY) and 1602–1622 (IGLFTISIWFMVGTWLFAPFL). The Extracellular portion of the chain corresponds to 1623 to 1675 (FNPSGFEWHEIVEDWADWKKWIEYDNGGIGVPPEKSWESWWEKDIEHLQHSGK). The helical transmembrane segment at 1676 to 1696 (WGIVVEIFFALRFFIFQYGLV) threads the bilayer. The Cytoplasmic segment spans residues 1697–1708 (YQLSAFKNKYSS). The helical transmembrane segment at 1709–1729 (LWVFGASWLLILILLLTVTVL) threads the bilayer. Residues 1730 to 1741 (DYARRRLGTEFQ) are Extracellular-facing. A helical transmembrane segment spans residues 1742-1762 (LLFRIIKVSLFLAFMAIFITL). Topologically, residues 1763–1772 (MTCRLILPQD) are cytoplasmic. Residues 1773 to 1793 (VFLCMLALIPTGWGLLLIAQS) traverse the membrane as a helical segment. The Extracellular portion of the chain corresponds to 1794-1815 (CKPLIQQPGIWSWVMTLAWVYD). A helical transmembrane segment spans residues 1816-1836 (LVMGSLLFIPIAFMAWFPFIS). Residues 1837-1871 (EFQTRMLFNQAFSRGLHISRILSGQRKHRSSKNKD) lie on the Cytoplasmic side of the membrane.

It belongs to the glycosyltransferase 48 family.

Its subcellular location is the cell membrane. The catalysed reaction is [(1-&gt;3)-beta-D-glucosyl](n) + UDP-alpha-D-glucose = [(1-&gt;3)-beta-D-glucosyl](n+1) + UDP + H(+). Functionally, involved in callose synthesis at the forming cell plate during cytokinesis. During plant growth and development, callose is found as a transitory component of the cell plate in dividing cells, is a major component of pollen mother cell walls and pollen tubes, and is found as a structural component of plasmodesmatal canals. The sequence is that of Callose synthase 4 (CALS4) from Arabidopsis thaliana (Mouse-ear cress).